Consider the following 316-residue polypeptide: MSPVISHPRSAAARHQSDELSPITITVDCPAKTNLTLEVGPAHDEWGGRHELDTTYCAIGVYDTVTATAKQPGAGFSLELEGAYLGDLASSRSDMRRNHAVLALFAMAQAAEREPDVALTITKRIPVGAGLGGGSADAAATMLAVNRLWELNWPIERLRTIAATLGADMPFCLTGGLAYGTGFGERITDIAPGSRDELALIEQGFSGEVLVGAYQSQLSTPEVYHTFDIVGAAEGDRNHLQAAAISLHPRSGQAIDAATQAGASHAFVSGSGPSVVAFAADEAAAQRIIEVWRDTAVVDRIIRAKSPEHPNISVRQ.

The active site involves Lys32. Pro126 to Ala136 provides a ligand contact to ATP. Residue Asp168 is part of the active site.

Belongs to the GHMP kinase family. IspE subfamily.

The enzyme catalyses 4-CDP-2-C-methyl-D-erythritol + ATP = 4-CDP-2-C-methyl-D-erythritol 2-phosphate + ADP + H(+). It participates in isoprenoid biosynthesis; isopentenyl diphosphate biosynthesis via DXP pathway; isopentenyl diphosphate from 1-deoxy-D-xylulose 5-phosphate: step 3/6. Its function is as follows. Catalyzes the phosphorylation of the position 2 hydroxy group of 4-diphosphocytidyl-2C-methyl-D-erythritol. The chain is 4-diphosphocytidyl-2-C-methyl-D-erythritol kinase from Bifidobacterium longum (strain DJO10A).